The primary structure comprises 210 residues: Riboflavin kinase (210 aa).

The interval Met-1–Ser-81 is H-T-H motif-like. The segment at Ile-82 to Leu-210 is riboflavin kinase. Residue Gly-91–Ala-96 participates in CDP binding. Residues Thr-120 and Asn-122 each coordinate Mg(2+). Residues Thr-177 and Glu-185 each contribute to the FMN site. Val-190 to Arg-193 serves as a coordination point for CDP.

This sequence belongs to the archaeal riboflavin kinase family. Mg(2+) serves as cofactor.

It catalyses the reaction riboflavin + CTP = CDP + FMN + H(+). It functions in the pathway cofactor biosynthesis; FMN biosynthesis; FMN from riboflavin (CTP route): step 1/1. Functionally, catalyzes the CTP-dependent phosphorylation of riboflavin (vitamin B2) to form flavin mononucleotide (FMN). The polypeptide is Riboflavin kinase (ribK) (Pyrobaculum aerophilum (strain ATCC 51768 / DSM 7523 / JCM 9630 / CIP 104966 / NBRC 100827 / IM2)).